We begin with the raw amino-acid sequence, 505 residues long: ATP synthase subunit alpha (505 aa).

ATP is bound at residue 171 to 178 (GDRQTGKT).

It belongs to the ATPase alpha/beta chains family. In terms of assembly, F-type ATPases have 2 components, CF(1) - the catalytic core - and CF(0) - the membrane proton channel. CF(1) has five subunits: alpha(3), beta(3), gamma(1), delta(1), epsilon(1). CF(0) has three main subunits: a(1), b(2) and c(9-12). The alpha and beta chains form an alternating ring which encloses part of the gamma chain. CF(1) is attached to CF(0) by a central stalk formed by the gamma and epsilon chains, while a peripheral stalk is formed by the delta and b chains.

The protein localises to the cell inner membrane. It catalyses the reaction ATP + H2O + 4 H(+)(in) = ADP + phosphate + 5 H(+)(out). In terms of biological role, produces ATP from ADP in the presence of a proton gradient across the membrane. The alpha chain is a regulatory subunit. This chain is ATP synthase subunit alpha, found in Campylobacter hominis (strain ATCC BAA-381 / DSM 21671 / CCUG 45161 / LMG 19568 / NCTC 13146 / CH001A).